The sequence spans 176 residues: MAEEESKPVPAEKEESLVQAGKVSQWLTENGFDHEFLAPDKNGVEIIKVSADFLLPTATALYAYGFNYLQCQGGIDLGPGQELVSMYHLIKVGDNSDRPEEVRVKVFLPRENPVVPSVYWIWKTADWQERESYDMFGIIYEGHPNLKRLLMPEDWVGWPLRKDYISPDFYELQDAY.

The protein belongs to the complex I 30 kDa subunit family. As to quaternary structure, NDH-1 can be composed of about 15 different subunits; different subcomplexes with different compositions have been identified which probably have different functions.

The protein resides in the cellular thylakoid membrane. The enzyme catalyses a plastoquinone + NADH + (n+1) H(+)(in) = a plastoquinol + NAD(+) + n H(+)(out). It carries out the reaction a plastoquinone + NADPH + (n+1) H(+)(in) = a plastoquinol + NADP(+) + n H(+)(out). Functionally, NDH-1 shuttles electrons from an unknown electron donor, via FMN and iron-sulfur (Fe-S) centers, to quinones in the respiratory and/or the photosynthetic chain. The immediate electron acceptor for the enzyme in this species is believed to be plastoquinone. Couples the redox reaction to proton translocation, and thus conserves the redox energy in a proton gradient. Cyanobacterial NDH-1 also plays a role in inorganic carbon-concentration. The polypeptide is NAD(P)H-quinone oxidoreductase subunit J (Nostoc punctiforme (strain ATCC 29133 / PCC 73102)).